The sequence spans 155 residues: MNVTFDLTPPSPSQREALIATLNAEERRILLQHGTEAPFCNRLLDNNQLGTYTCRLCGLPLFHSNAKFKSGTGWPSFFEPYTHTHIRKQHDTSHGMIRTEILCARCNSHLGHLFPDGPPPTYERYCLNSVSLTFIPTGTLLPDQLHRGDNTTYRT.

Residues 15–137 (REALIATLNA…NSVSLTFIPT (123 aa)) enclose the MsrB domain. Residues Cys-54, Cys-57, Cys-103, and Cys-106 each contribute to the Zn(2+) site. The Nucleophile role is filled by Cys-126.

It belongs to the MsrB Met sulfoxide reductase family. It depends on Zn(2+) as a cofactor.

It catalyses the reaction L-methionyl-[protein] + [thioredoxin]-disulfide + H2O = L-methionyl-(R)-S-oxide-[protein] + [thioredoxin]-dithiol. This Xylella fastidiosa (strain M23) protein is Peptide methionine sulfoxide reductase MsrB.